A 136-amino-acid polypeptide reads, in one-letter code: UPF0213 protein AHA_3736 (136 aa).

Residues 17–92 enclose the GIY-YIG domain; the sequence is SHWFIYMVRT…KQQSKAFKEQ (76 aa). A disordered region spans residues 114–136; the sequence is QKRPRYAAAKEGSDNRECQRQVD. Residues 124–136 are compositionally biased toward basic and acidic residues; that stretch reads EGSDNRECQRQVD.

It belongs to the UPF0213 family.

In Aeromonas hydrophila subsp. hydrophila (strain ATCC 7966 / DSM 30187 / BCRC 13018 / CCUG 14551 / JCM 1027 / KCTC 2358 / NCIMB 9240 / NCTC 8049), this protein is UPF0213 protein AHA_3736.